The following is a 380-amino-acid chain: Protein RecA (380 aa).

65-72 (GPESSGKT) serves as a coordination point for ATP. Residues 329-380 (DATGEETSETDDQAKEAKDKGTAKNGSKGQSKSTKATPAETALDLGDQPTEK) form a disordered region. Residues 340–350 (DQAKEAKDKGT) show a composition bias toward basic and acidic residues. The segment covering 352–364 (KNGSKGQSKSTKA) has biased composition (polar residues).

This sequence belongs to the RecA family.

The protein resides in the cytoplasm. Can catalyze the hydrolysis of ATP in the presence of single-stranded DNA, the ATP-dependent uptake of single-stranded DNA by duplex DNA, and the ATP-dependent hybridization of homologous single-stranded DNAs. It interacts with LexA causing its activation and leading to its autocatalytic cleavage. The protein is Protein RecA of Lactiplantibacillus plantarum (strain ATCC BAA-793 / NCIMB 8826 / WCFS1) (Lactobacillus plantarum).